The following is a 110-amino-acid chain: Competence pilus inhibition repressor (110 aa).

The 55-residue stretch at 7 to 61 (VRFLRKRQGWTQQQLADFSHTSKSNISNLENGNQGYSPAILEYLAKAFNCSVSQI) folds into the HTH cro/C1-type domain. Residues 18 to 37 (QQQLADFSHTSKSNISNLEN) constitute a DNA-binding region (H-T-H motif).

Its function is as follows. Represses transcription of the PilB-specific inhibitory protein CpiA. The sequence is that of Competence pilus inhibition repressor from Acinetobacter baylyi (strain ATCC 33305 / BD413 / ADP1).